The chain runs to 662 residues: Protein Aster-C (662 aa).

A disordered region spans residues 1–34 (MEGAPTVRQVMNEGDSSLATELQEDVEENPSPTV). The GRAM domain maps to 69–136 (EEYRRQFTHL…KNITFMTKEK (68 aa)). Disordered stretches follow at residues 212–237 (SIED…EKLS) and 250–284 (VSET…LPTL). The segment covering 265–276 (LGKEESQNEKQT) has biased composition (basic and acidic residues). One can recognise a VASt domain in the interval 326–497 (HGRLFINRIF…DLLIEESILN (172 aa)). The chain crosses the membrane as a helical span at residues 557 to 577 (LIVVMSIFVLLLVLLNVTLFL).

Its subcellular location is the endoplasmic reticulum membrane. The protein resides in the cell membrane. Functionally, cholesterol transporter that mediates non-vesicular transport of cholesterol from the plasma membrane (PM) to the endoplasmic reticulum (ER). Contains unique domains for binding cholesterol and the PM, thereby serving as a molecular bridge for the transfer of cholesterol from the PM to the ER. Plays a crucial role in cholesterol homeostasis and has the unique ability to localize to the PM based on the level of membrane cholesterol. In lipid-poor conditions localizes to the ER membrane and in response to excess cholesterol in the PM is recruited to the endoplasmic reticulum-plasma membrane contact sites (EPCS) which is mediated by the GRAM domain. At the EPCS, the sterol-binding VASt/ASTER domain binds to the cholesterol in the PM and facilitates its transfer from the PM to ER. The chain is Protein Aster-C (GRAMD1C) from Pongo abelii (Sumatran orangutan).